We begin with the raw amino-acid sequence, 63 residues long: DNA-directed RNA polymerases I, II, and III subunit RPABC4 (63 aa).

C24, C27, C41, and C44 together coordinate Zn(2+). The C4-type zinc-finger motif lies at 24–44 (CADCGARNTIQAKEVIRCREC).

Belongs to the archaeal Rpo12/eukaryotic RPC10 RNA polymerase subunit family. In terms of assembly, component of the RNA polymerase I (Pol I), RNA polymerase II (Pol II) and RNA polymerase III (Pol III) complexes consisting of 14, 12 and 17 subunits, respectively.

It localises to the nucleus. DNA-dependent RNA polymerase catalyzes the transcription of DNA into RNA using the four ribonucleoside triphosphates as substrates. Common component of RNA polymerases I, II and III which synthesize ribosomal RNA precursors, mRNA precursors and many functional non-coding RNAs, and a small RNAs, such as 5S rRNA and tRNAs, respectively. This chain is DNA-directed RNA polymerases I, II, and III subunit RPABC4 (rpc10), found in Schizosaccharomyces pombe (strain 972 / ATCC 24843) (Fission yeast).